The sequence spans 214 residues: Adenylate kinase (214 aa).

10–15 (GAGKGT) provides a ligand contact to ATP. Residues 30–59 (STGDMFREAVASKSELGKKVEEILKRGDLV) form an NMP region. AMP is bound by residues Thr31, Arg36, 57–59 (DLV), 85–88 (GFPR), and Gln92. Positions 126-163 (NRRICSNCGKIYNLITLPPKVDGKCDVCGGTLYQREDD) are LID. Arg127 serves as a coordination point for ATP. Zn(2+) is bound by residues Cys130 and Cys133. Residue 136-137 (IY) participates in ATP binding. Zn(2+)-binding residues include Cys150 and Cys153. AMP-binding residues include Arg160 and Arg171. Leu199 contacts ATP.

This sequence belongs to the adenylate kinase family. In terms of assembly, monomer.

It is found in the cytoplasm. The enzyme catalyses AMP + ATP = 2 ADP. The protein operates within purine metabolism; AMP biosynthesis via salvage pathway; AMP from ADP: step 1/1. In terms of biological role, catalyzes the reversible transfer of the terminal phosphate group between ATP and AMP. Plays an important role in cellular energy homeostasis and in adenine nucleotide metabolism. This is Adenylate kinase from Thermosipho africanus (strain TCF52B).